Consider the following 88-residue polypeptide: Small ribosomal subunit protein uS15c (88 aa).

The protein belongs to the universal ribosomal protein uS15 family. In terms of assembly, part of the 30S ribosomal subunit.

The protein resides in the plastid. It localises to the chloroplast. The polypeptide is Small ribosomal subunit protein uS15c (rps15) (Physcomitrium patens (Spreading-leaved earth moss)).